Reading from the N-terminus, the 1146-residue chain is ATP-dependent helicase/deoxyribonuclease subunit B (1146 aa).

Positions 1 to 280 (MSLRFIYGRA…LNSKPLFRFS (280 aa)) constitute a UvrD-like helicase ATP-binding domain. 8 to 15 (GRAGSGKT) serves as a coordination point for ATP. Residues 276–584 (LFRFSQSPEL…LVGSLERSRS (309 aa)) enclose the UvrD-like helicase C-terminal domain. Residues cysteine 786, cysteine 1105, cysteine 1108, and cysteine 1114 each coordinate [4Fe-4S] cluster.

This sequence belongs to the helicase family. AddB/RexB type 1 subfamily. As to quaternary structure, heterodimer of AddA and AddB. Mg(2+) is required as a cofactor. It depends on [4Fe-4S] cluster as a cofactor.

Functionally, the heterodimer acts as both an ATP-dependent DNA helicase and an ATP-dependent, dual-direction single-stranded exonuclease. Recognizes the chi site generating a DNA molecule suitable for the initiation of homologous recombination. The AddB subunit has 5' -&gt; 3' nuclease activity but not helicase activity. The chain is ATP-dependent helicase/deoxyribonuclease subunit B from Acetivibrio thermocellus (strain ATCC 27405 / DSM 1237 / JCM 9322 / NBRC 103400 / NCIMB 10682 / NRRL B-4536 / VPI 7372) (Clostridium thermocellum).